The sequence spans 168 residues: Ribosome rescue factor SmrB (168 aa).

Residues 92–167 (LDLHGLTKEQ…GDAAILILFE (76 aa)) form the Smr domain.

Belongs to the SmrB family. Associates with collided ribosomes, but not with correctly translating polysomes.

Functionally, acts as a ribosome collision sensor. Detects stalled/collided disomes (pairs of ribosomes where the leading ribosome is stalled and a second ribosome has collided with it) and endonucleolytically cleaves mRNA at the 5' boundary of the stalled ribosome. Stalled/collided disomes form a new interface (primarily via the 30S subunits) that binds SmrB. Cleaved mRNA becomes available for tmRNA ligation, leading to ribosomal subunit dissociation and rescue of stalled ribosomes. This chain is Ribosome rescue factor SmrB, found in Pasteurella multocida (strain Pm70).